The sequence spans 521 residues: CD166 antigen (521 aa).

Over 1–465 the chain is Extracellular; that stretch reads GSPVFIAFRS…NREKVNDQAK (465 aa). Asn29, Asn33, Asn105, Asn203, Asn244, Asn299, Asn395, Asn418, and Asn437 each carry an N-linked (GlcNAc...) asparagine glycan. The Ig-like V-type 2 domain maps to 63–172; the sequence is PTVVKVFKQP…YGPSGQKTVH (110 aa). Cys95 and Cys158 are joined by a disulfide. 3 consecutive Ig-like C2-type domains span residues 183–266, 271–347, and 354–439; these read PTEQ…TAIT, DLSL…ESLT, and PQIK…LNVS. Cystine bridges form between Cys208-Cys251, Cys292-Cys330, and Cys373-Cys423. A helical membrane pass occupies residues 466–487; that stretch reads LIVGIVVGLLLAALVAGVVYWL. Topologically, residues 488–521 are cytoplasmic; sequence YMKKSKTASKHVNKDLGNMEENKKLEENNHKTEA. The interval 500–521 is disordered; sequence NKDLGNMEENKKLEENNHKTEA. Residues 507–521 are compositionally biased toward basic and acidic residues; sequence EENKKLEENNHKTEA.

As to quaternary structure, homodimer. Interacts (via extracellular domain) with CD6 (via extracellular domain). Homodimerization and interaction with CD6 involve the same region and cannot occur simultaneously. The affinity for CD6 is much higher than the affinity for self-association. Interacts (via glycosylated extracellular domain) with LGALS1 and LGALS3. Interaction with LGALS1 or LGALS3 inhibits interaction with CD6. In terms of processing, glycosylated.

The protein localises to the cell membrane. It is found in the cell projection. It localises to the axon. The protein resides in the dendrite. Its function is as follows. Cell adhesion molecule that mediates both heterotypic cell-cell contacts via its interaction with CD6, as well as homotypic cell-cell contacts. Promotes T-cell activation and proliferation via its interactions with CD6. Contributes to the formation and maturation of the immunological synapse via its interactions with CD6. Mediates homotypic interactions with cells that express ALCAM. Mediates attachment of dendritic cells onto endothelial cells via homotypic interaction. Inhibits endothelial cell migration and promotes endothelial tube formation via homotypic interactions. Required for normal organization of the lymph vessel network. Required for normal hematopoietic stem cell engraftment in the bone marrow. Plays a role in hematopoiesis; required for normal numbers of hematopoietic stem cells in bone marrow. Promotes in vitro osteoblast proliferation and differentiation. Promotes neurite extension, axon growth and axon guidance; axons grow preferentially on surfaces that contain ALCAM. Mediates outgrowth and pathfinding for retinal ganglion cell axons. This chain is CD166 antigen (ALCAM), found in Oryctolagus cuniculus (Rabbit).